A 423-amino-acid chain; its full sequence is Endochitinase 42 (423 aa).

The signal sequence occupies residues Met1–Pro22. Positions Lys23 to Arg34 are excised as a propeptide. The GH18 domain occupies Tyr38–Leu401. Chitin is bound by residues Gly102–Thr103 and Gly129–Thr132. The active-site Proton donor is Glu171. Tyr172 contributes to the chitin binding site. Residue Asn218 is glycosylated (N-linked (GlcNAc...) asparagine). Chitin is bound by residues Met237–Asp240 and Trp378.

This sequence belongs to the glycosyl hydrolase 18 family. Chitinase class V subfamily.

The protein resides in the secreted. It carries out the reaction Random endo-hydrolysis of N-acetyl-beta-D-glucosaminide (1-&gt;4)-beta-linkages in chitin and chitodextrins.. Its function is as follows. Secreted chitinase involved in the degradation of chitin, a component of the cell walls of fungi and exoskeletal elements of some animals (including worms and arthropods). Plays a morphogenetic role during apical growth, cell division and differentiation (cell wall morphogenesis). Also acts as an antifungal agent. Involved in the degradation and further assimilation of phytopathogenic fungi, namely mycoparasitism, the major mechanism accounting for the antagonistic activity against phytopathogenic fungi displayed by Trichoderma. The chain is Endochitinase 42 (chit42) from Trichoderma harzianum (Hypocrea lixii).